The primary structure comprises 30 residues: Varv peptide H (30 aa).

Positions 1–30 form a cross-link, cyclopeptide (Gly-Asn); sequence GLPVCGETCFGGTCNTPGCSCETWPVCSRN. Disulfide bonds link Cys-5/Cys-19, Cys-9/Cys-21, and Cys-14/Cys-27.

Post-translationally, this is a cyclic peptide.

Its function is as follows. Probably participates in a plant defense mechanism. The polypeptide is Varv peptide H (Viola arvensis (European field pansy)).